Here is a 689-residue protein sequence, read N- to C-terminus: Elongation factor G (689 aa).

Residues 8 to 283 (SKCRNIGIMA…AVVDFLPAPN (276 aa)) enclose the tr-type G domain. GTP is bound by residues 17–24 (AHIDAGKT), 81–85 (DTPGH), and 135–138 (NKMD).

Belongs to the TRAFAC class translation factor GTPase superfamily. Classic translation factor GTPase family. EF-G/EF-2 subfamily.

The protein resides in the cytoplasm. In terms of biological role, catalyzes the GTP-dependent ribosomal translocation step during translation elongation. During this step, the ribosome changes from the pre-translocational (PRE) to the post-translocational (POST) state as the newly formed A-site-bound peptidyl-tRNA and P-site-bound deacylated tRNA move to the P and E sites, respectively. Catalyzes the coordinated movement of the two tRNA molecules, the mRNA and conformational changes in the ribosome. The sequence is that of Elongation factor G from Ehrlichia ruminantium (strain Welgevonden).